Reading from the N-terminus, the 736-residue chain is Factor of DNA methylation 4 (736 aa).

Composition is skewed to basic and acidic residues over residues 80–90 (RKYLRPRERPR) and 144–167 (DSGR…SNED). A disordered region spans residues 80 to 167 (RKYLRPRERP…KPDPFFSNED (88 aa)). A coiled-coil region spans residues 360 to 597 (TLVSNLENTL…RSMRELTTRA (238 aa)).

Acts in association with FDM3 and FDM5 for RNA-directed DNA methylation (RdDM). The polypeptide is Factor of DNA methylation 4 (Arabidopsis thaliana (Mouse-ear cress)).